The primary structure comprises 365 residues: Phospho-N-acetylmuramoyl-pentapeptide-transferase (365 aa).

The next 10 membrane-spanning stretches (helical) occupy residues 2–22 (ISLIIGIMVSLVVTIVGTPLL), 51–71 (TLGGVVINLAVVLGWCSSALY), 80–100 (PSWSAVLVLFAMLSMGFLGFI), 118–138 (GKFIGQFILATIYAVLALILP), 167–187 (VAIVLFVIWVNFLMTAWTNAI), 196–216 (LAAGSSMIAFIGYAIIAFWEF), 234–254 (PLDLTIIAACAAVACFGFLWY), 256–276 (SNPASIFMGDTGSLALGGLFA), 277–297 (AMSIATHTEFLAIILGGLFVI), and 340–360 (FWMIEMLFVLIALVLFYGDWV).

This sequence belongs to the glycosyltransferase 4 family. MraY subfamily. The cofactor is Mg(2+).

The protein resides in the cell membrane. The enzyme catalyses UDP-N-acetyl-alpha-D-muramoyl-L-alanyl-gamma-D-glutamyl-meso-2,6-diaminopimeloyl-D-alanyl-D-alanine + di-trans,octa-cis-undecaprenyl phosphate = di-trans,octa-cis-undecaprenyl diphospho-N-acetyl-alpha-D-muramoyl-L-alanyl-D-glutamyl-meso-2,6-diaminopimeloyl-D-alanyl-D-alanine + UMP. It participates in cell wall biogenesis; peptidoglycan biosynthesis. Functionally, catalyzes the initial step of the lipid cycle reactions in the biosynthesis of the cell wall peptidoglycan: transfers peptidoglycan precursor phospho-MurNAc-pentapeptide from UDP-MurNAc-pentapeptide onto the lipid carrier undecaprenyl phosphate, yielding undecaprenyl-pyrophosphoryl-MurNAc-pentapeptide, known as lipid I. The polypeptide is Phospho-N-acetylmuramoyl-pentapeptide-transferase (Bifidobacterium adolescentis (strain ATCC 15703 / DSM 20083 / NCTC 11814 / E194a)).